Consider the following 501-residue polypeptide: Histone deacetylase 19 (501 aa).

The histone deacetylase stretch occupies residues 17–329 (RKVCYFYDPE…WCYETGVALG (313 aa)). The active-site Proton donor/acceptor is the histidine 149. Zn(2+) is bound by residues aspartate 184, histidine 186, and aspartate 272. Positions 383–501 (HAPSVPFQER…GAEQAFPPKT (119 aa)) are disordered. The segment covering 397-407 (ETPEVDEDQED) has biased composition (acidic residues). A Phosphoserine modification is found at serine 416. 2 stretches are compositionally biased toward basic and acidic residues: residues 422 to 457 (DDRK…KGCE) and 479 to 488 (ASVKMEEEGT).

This sequence belongs to the histone deacetylase family. HD type 1 subfamily. Interacts with SIN3, SAP18 and TPR1. Interacts with CDKE-1, MED14 and LUG. Interacts with TPL. Interacts with AHL22. Requires Zn(2+) as cofactor. Highly expressed in leaves, stems, flowers and young siliques.

Its subcellular location is the nucleus. It catalyses the reaction N(6)-acetyl-L-lysyl-[histone] + H2O = L-lysyl-[histone] + acetate. Functionally, responsible for the deacetylation of lysine residues on the N-terminal part of the core histones (H2A, H2B, H3 and H4). Histone deacetylation gives a tag for epigenetic repression and plays an important role in transcriptional regulation, cell cycle progression and developmental events. Histone deacetylases act via the formation of large multiprotein complexes. HDA19 is involved in jasmonic acid and ethylene signaling of pathogen response. Part of a repressor complex including APETALA2 (AP2) and TOPLESS (TPL) that control the expression domains of numerous floral organ identity genes. Involved in negative regulation of salinity stress response. Represses the expression of stress tolerance-related genes, genes coding for late embryogenesis abundant (LEA) proteins that prevent protein aggregation, and positive regulators of abscisic acid (ABA) signaling, such as ABI5 and NAC019. The polypeptide is Histone deacetylase 19 (Arabidopsis thaliana (Mouse-ear cress)).